The chain runs to 79 residues: Protein FAM236A (79 aa).

Belongs to the FAM236 family.

The sequence is that of Protein FAM236A from Homo sapiens (Human).